A 115-amino-acid chain; its full sequence is NAD(P)H-quinone oxidoreductase subunit M (115 aa).

This sequence belongs to the complex I NdhM subunit family. As to quaternary structure, NDH-1 can be composed of about 15 different subunits; different subcomplexes with different compositions have been identified which probably have different functions.

The protein resides in the cellular thylakoid membrane. It carries out the reaction a plastoquinone + NADH + (n+1) H(+)(in) = a plastoquinol + NAD(+) + n H(+)(out). The enzyme catalyses a plastoquinone + NADPH + (n+1) H(+)(in) = a plastoquinol + NADP(+) + n H(+)(out). In terms of biological role, NDH-1 shuttles electrons from an unknown electron donor, via FMN and iron-sulfur (Fe-S) centers, to quinones in the respiratory and/or the photosynthetic chain. The immediate electron acceptor for the enzyme in this species is believed to be plastoquinone. Couples the redox reaction to proton translocation, and thus conserves the redox energy in a proton gradient. Cyanobacterial NDH-1 also plays a role in inorganic carbon-concentration. This Prochlorococcus marinus (strain MIT 9301) protein is NAD(P)H-quinone oxidoreductase subunit M.